Here is a 382-residue protein sequence, read N- to C-terminus: Histidinol-phosphate aminotransferase (382 aa).

Lys-215 carries the N6-(pyridoxal phosphate)lysine modification. Positions 363-382 (NIDNQNKTYSQTSSIRKGTI) are disordered.

This sequence belongs to the class-II pyridoxal-phosphate-dependent aminotransferase family. Histidinol-phosphate aminotransferase subfamily. In terms of assembly, homodimer. Pyridoxal 5'-phosphate serves as cofactor.

It carries out the reaction L-histidinol phosphate + 2-oxoglutarate = 3-(imidazol-4-yl)-2-oxopropyl phosphate + L-glutamate. It participates in amino-acid biosynthesis; L-histidine biosynthesis; L-histidine from 5-phospho-alpha-D-ribose 1-diphosphate: step 7/9. The protein is Histidinol-phosphate aminotransferase of Yersinia pestis bv. Antiqua (strain Antiqua).